The chain runs to 409 residues: Endoglucanase B (409 aa).

The first 21 residues, 1-21 (MKLKRIAALLTAAVMSVGVMA), serve as a signal peptide directing secretion. The disordered stretch occupies residues 23–66 (CGGSKSDDKSKADTKSAAETSGAEGDSSESEEIPVSQTHTNDPM). Residues 27-38 (KSDDKSKADTKS) show a composition bias toward basic and acidic residues. The segment covering 57-66 (VSQTHTNDPM) has biased composition (polar residues). Glu-212 acts as the Proton donor in catalysis. The Nucleophile role is filled by Glu-332.

The protein belongs to the glycosyl hydrolase 5 (cellulase A) family.

The catalysed reaction is Endohydrolysis of (1-&gt;4)-beta-D-glucosidic linkages in cellulose, lichenin and cereal beta-D-glucans.. The polypeptide is Endoglucanase B (celB) (Ruminococcus albus).